The sequence spans 467 residues: 3-isopropylmalate dehydratase large subunit (467 aa).

[4Fe-4S] cluster-binding residues include C348, C409, and C412.

Belongs to the aconitase/IPM isomerase family. LeuC type 1 subfamily. In terms of assembly, heterodimer of LeuC and LeuD. It depends on [4Fe-4S] cluster as a cofactor.

The enzyme catalyses (2R,3S)-3-isopropylmalate = (2S)-2-isopropylmalate. Its pathway is amino-acid biosynthesis; L-leucine biosynthesis; L-leucine from 3-methyl-2-oxobutanoate: step 2/4. Catalyzes the isomerization between 2-isopropylmalate and 3-isopropylmalate, via the formation of 2-isopropylmaleate. The polypeptide is 3-isopropylmalate dehydratase large subunit (Thiobacillus denitrificans (strain ATCC 25259 / T1)).